The primary structure comprises 189 residues: ATP synthase subunit b (189 aa).

Residues 25 to 45 (LPVWPEVVIGLICFGIVFFVF) form a helical membrane-spanning segment.

The protein belongs to the ATPase B chain family. F-type ATPases have 2 components, F(1) - the catalytic core - and F(0) - the membrane proton channel. F(1) has five subunits: alpha(3), beta(3), gamma(1), delta(1), epsilon(1). F(0) has three main subunits: a(1), b(2) and c(10-14). The alpha and beta chains form an alternating ring which encloses part of the gamma chain. F(1) is attached to F(0) by a central stalk formed by the gamma and epsilon chains, while a peripheral stalk is formed by the delta and b chains.

It localises to the cell membrane. F(1)F(0) ATP synthase produces ATP from ADP in the presence of a proton or sodium gradient. F-type ATPases consist of two structural domains, F(1) containing the extramembraneous catalytic core and F(0) containing the membrane proton channel, linked together by a central stalk and a peripheral stalk. During catalysis, ATP synthesis in the catalytic domain of F(1) is coupled via a rotary mechanism of the central stalk subunits to proton translocation. Its function is as follows. Component of the F(0) channel, it forms part of the peripheral stalk, linking F(1) to F(0). The protein is ATP synthase subunit b of Streptomyces griseus subsp. griseus (strain JCM 4626 / CBS 651.72 / NBRC 13350 / KCC S-0626 / ISP 5235).